The primary structure comprises 313 residues: Glucosyl-dolichyl phosphate glucuronosyltransferase (313 aa).

The helical transmembrane segment at 284 to 304 (LIAIFVFTAAVGFGYVYGLLT) threads the bilayer.

Belongs to the glycosyltransferase 2 family.

It is found in the cell membrane. It catalyses the reaction an archaeal dolichyl alpha-D-glucosyl phosphate + UDP-alpha-D-glucuronate = an archaeal dolichyl beta-D-glucuronosyl-(1-&gt;4)-alpha-D-glucosyl phosphate + UDP + H(+). The protein operates within cell surface structure biogenesis; S-layer biogenesis. Functionally, involved in the protein N-glycosylation pathway responsible for the assembly and attachment of an N-linked pentasaccharide that decorates the S-layer glycoprotein and flagellins. Catalyzes the transfer of a glucuronate residue (GlcA) to a glucose residue already bound to a dolichol phosphate (DolP), a compound that serves as a glycan lipid carrier in Archaea. In vitro, is able to add GlcA to DolP-Glc in which the omega-position isoprene is not saturated. However, the likely physiological lipid substrate is alpha,omega-saturated. The sequence is that of Glucosyl-dolichyl phosphate glucuronosyltransferase from Haloferax volcanii (strain ATCC 29605 / DSM 3757 / JCM 8879 / NBRC 14742 / NCIMB 2012 / VKM B-1768 / DS2) (Halobacterium volcanii).